A 369-amino-acid polypeptide reads, in one-letter code: Flagellar P-ring protein (369 aa).

An N-terminal signal peptide occupies residues 1-22 (MFNARRLIAATLLMSCAFGAHA).

Belongs to the FlgI family. In terms of assembly, the basal body constitutes a major portion of the flagellar organelle and consists of four rings (L,P,S, and M) mounted on a central rod.

It is found in the periplasm. The protein resides in the bacterial flagellum basal body. Assembles around the rod to form the L-ring and probably protects the motor/basal body from shearing forces during rotation. This is Flagellar P-ring protein from Pseudomonas entomophila (strain L48).